The sequence spans 87 residues: Large ribosomal subunit protein bL27 (87 aa).

The tract at residues 1–24 (MAHKKGTGSTRNGRDSRSQRLGVK) is disordered.

The protein belongs to the bacterial ribosomal protein bL27 family.

The chain is Large ribosomal subunit protein bL27 from Crocosphaera subtropica (strain ATCC 51142 / BH68) (Cyanothece sp. (strain ATCC 51142)).